The chain runs to 415 residues: Alpha-2Db adrenergic receptor (415 aa).

The Extracellular portion of the chain corresponds to 1–33; sequence MDLSTITFLLPNSSEDTNGTSAPRLPPHSQCAS. Residues N12 and N18 are each glycosylated (N-linked (GlcNAc...) asparagine). A helical transmembrane segment spans residues 34–58; sequence VLIVLVVTVIILVTIVGNVLVVVAV. Residues 59–70 are Cytoplasmic-facing; it reads FTSRALRAPQNL. The chain crosses the membrane as a helical span at residues 71-96; it reads FLVSLAAADILVATLVIPFSLANEVM. Residues 97-106 are Extracellular-facing; that stretch reads GYWYLGSTWC. Residues C106 and C179 are joined by a disulfide bond. Residues 107–129 form a helical membrane-spanning segment; sequence AFYLALDVLFCTSSIVHLCAISL. The Cytoplasmic portion of the chain corresponds to 130–150; sequence DRYWSVTKAVSYNLKRTPRRI. A helical membrane pass occupies residues 151–173; the sequence is KIMITVVWVISAVISFPPLLMTK. Topologically, residues 174 to 184 are extracellular; the sequence is HDELECLLNNE. A glycan (N-linked (GlcNAc...) asparagine) is linked at N183. The chain crosses the membrane as a helical span at residues 185–208; that stretch reads TWYILSSCIVSFFAPGLIMILVYC. The Cytoplasmic portion of the chain corresponds to 209–339; it reads RIYRVAKQRA…QMREKRFTFV (131 aa). Positions 234-299 are disordered; it reads QSETCFVRKG…EGAQSCPKPN (66 aa). Positions 276-286 are enriched in basic residues; sequence NRHRNSRFAKS. A helical membrane pass occupies residues 340–363; the sequence is LAVVMGVFVLCWFPFFFTYSLHAI. The Extracellular segment spans residues 364–376; the sequence is CRKSCTIPDSLFN. The helical transmembrane segment at 377-397 threads the bilayer; it reads LFFWIGYCNSSVNPIIYTIFN. The Cytoplasmic portion of the chain corresponds to 398–415; it reads RDFRKAFKKIMCRHSTRT.

The protein belongs to the G-protein coupled receptor 1 family. Adrenergic receptor subfamily. ADRA2D sub-subfamily.

It is found in the cell membrane. Alpha-2 adrenergic receptors mediate the catecholamine-induced inhibition of adenylate cyclase through the action of G proteins. The order of potency for this receptor is dexmedetomidine &gt; norepinephrine = epinephrine &gt; oxymetazoline. The polypeptide is Alpha-2Db adrenergic receptor (adra2db) (Danio rerio (Zebrafish)).